The sequence spans 352 residues: tRNA N6-adenosine threonylcarbamoyltransferase (352 aa).

The Fe cation site is built by histidine 115 and histidine 119. Substrate-binding positions include 137–141 (LVSGG), aspartate 170, glycine 183, and asparagine 281. Aspartate 309 contributes to the Fe cation binding site.

This sequence belongs to the KAE1 / TsaD family. The cofactor is Fe(2+).

It is found in the cytoplasm. It carries out the reaction L-threonylcarbamoyladenylate + adenosine(37) in tRNA = N(6)-L-threonylcarbamoyladenosine(37) in tRNA + AMP + H(+). Functionally, required for the formation of a threonylcarbamoyl group on adenosine at position 37 (t(6)A37) in tRNAs that read codons beginning with adenine. Is involved in the transfer of the threonylcarbamoyl moiety of threonylcarbamoyl-AMP (TC-AMP) to the N6 group of A37, together with TsaE and TsaB. TsaD likely plays a direct catalytic role in this reaction. In Methylocapsa acidiphila, this protein is tRNA N6-adenosine threonylcarbamoyltransferase.